The following is a 282-amino-acid chain: MKIVTTVQEMQHITKELRASGKSIGFVPTMGYLHEGHATLLRKAREENEIVVLSVFVNPLQFGPNEDLDRYPRDIDRDENVAKENGVDYLFYPSVEEMYPAEQTTTVEVVKRTDVLCGKQRPGHFAGVATVLMKLFNITLPTRAYFGMKDAQQVAVIEGFVADFNIPVIIVPVDIVREEDGLAKSSRNVYLSQKERKEAPHLYRSLCMAKERIEAGERNAEIITTLVKEYIETYTKGTVDYADLYAYPSLQVVDQIEGRIILAIAVKFENVRLIDNITLTVK.

30–37 (MGYLHEGH) contacts ATP. Catalysis depends on His37, which acts as the Proton donor. Gln61 is a (R)-pantoate binding site. Gln61 is a binding site for beta-alanine. 147-150 (GMKD) lines the ATP pocket. Gln153 serves as a coordination point for (R)-pantoate. ATP contacts are provided by residues Val176 and 184 to 187 (KSSR).

Belongs to the pantothenate synthetase family. Homodimer.

It is found in the cytoplasm. It catalyses the reaction (R)-pantoate + beta-alanine + ATP = (R)-pantothenate + AMP + diphosphate + H(+). Its pathway is cofactor biosynthesis; (R)-pantothenate biosynthesis; (R)-pantothenate from (R)-pantoate and beta-alanine: step 1/1. Catalyzes the condensation of pantoate with beta-alanine in an ATP-dependent reaction via a pantoyl-adenylate intermediate. The sequence is that of Pantothenate synthetase from Bacillus anthracis (strain A0248).